We begin with the raw amino-acid sequence, 472 residues long: Serine/threonine-protein kinase ULK3 (472 aa).

The 257-residue stretch at 14–270 (FILTERLGSG…FKDFFAHPWV (257 aa)) folds into the Protein kinase domain. ATP is bound by residues 20–28 (LGSGTYATV) and K44. The active-site Proton acceptor is the D137. S176 is modified (phosphoserine). One can recognise an MIT 1 domain in the interval 280 to 348 (SLAQARALVV…SRAEELKAIV (69 aa)). Phosphoserine; by autocatalysis is present on residues S350, S384, and S464. The MIT 2 domain maps to 375–444 (RLLAALEVAS…ARAEYLKEQI (70 aa)).

Belongs to the protein kinase superfamily. Ser/Thr protein kinase family. APG1/unc-51/ULK1 subfamily. Interacts (via protein kinase domain) with SUFU. In terms of processing, autophosphorylated. Autophosphorylation is blocked by interaction with SUFU.

The protein localises to the cytoplasm. The enzyme catalyses L-seryl-[protein] + ATP = O-phospho-L-seryl-[protein] + ADP + H(+). The catalysed reaction is L-threonyl-[protein] + ATP = O-phospho-L-threonyl-[protein] + ADP + H(+). In terms of biological role, serine/threonine protein kinase that acts as a regulator of Sonic hedgehog (SHH) signaling and autophagy. Acts as a negative regulator of SHH signaling in the absence of SHH ligand: interacts with SUFU, thereby inactivating the protein kinase activity and preventing phosphorylation of GLI proteins (GLI1, GLI2 and/or GLI3). Positively regulates SHH signaling in the presence of SHH: dissociates from SUFU, autophosphorylates and mediates phosphorylation of GLI2, activating it and promoting its nuclear translocation. Phosphorylates in vitro GLI2, as well as GLI1 and GLI3, although less efficiently. Also acts as a regulator of autophagy: following cellular senescence, able to induce autophagy. The protein is Serine/threonine-protein kinase ULK3 (Ulk3) of Mus musculus (Mouse).